The primary structure comprises 508 residues: Lysine-specific permease LysP (508 aa).

Transmembrane regions (helical) follow at residues 43–63 (SMIA…GDVI), 66–86 (AGPF…YFLM), 112–132 (PAFG…TVAV), 144–164 (WLPD…VFSI), 184–204 (ITVV…IMGG), 219–239 (FVGG…LLVA), 270–290 (IFWR…AIIP), 314–334 (VGFS…VVSA), 367–387 (IPFI…LTSI), 393–413 (FTLL…GIAI), 436–456 (AKLF…VTLG), and 467–487 (WVQG…YLGY).

It belongs to the amino acid-polyamine-organocation (APC) superfamily. Amino acid transporter (AAT) (TC 2.A.3.1) family.

The protein resides in the cell membrane. The enzyme catalyses L-lysine(out) + H(+)(out) = L-lysine(in) + H(+)(in). In terms of biological role, permease involved in lysine uptake. The sequence is that of Lysine-specific permease LysP from Lactococcus lactis subsp. cremoris (strain MG1363).